The primary structure comprises 750 residues: uncharacterized protein (750 aa).

N-linked (GlcNAc...) asparagine glycosylation is found at N61, N84, N115, N154, N176, N197, N207, N228, N241, N267, N293, N299, N312, N335, N351, N373, N389, and N519. Phosphoserine occurs at positions 675 and 678. K697 participates in a covalent cross-link: Glycyl lysine isopeptide (Lys-Gly) (interchain with G-Cter in ubiquitin). Polar residues-rich tracts occupy residues 703–726 (EITAIDNSSSANNTDVTGSTSNRT) and 736–750 (KDSNGPVNNNAHLVA). The interval 703 to 750 (EITAIDNSSSANNTDVTGSTSNRTELSHPDVTPKDSNGPVNNNAHLVA) is disordered. 3 N-linked (GlcNAc...) asparagine glycosylation sites follow: N709, N714, and N724.

In terms of processing, N-glycosylated.

The protein resides in the mitochondrion. This is an uncharacterized protein from Saccharomyces cerevisiae (strain ATCC 204508 / S288c) (Baker's yeast).